A 524-amino-acid polypeptide reads, in one-letter code: Bifunctional purine biosynthesis protein PurH (524 aa).

Positions Met-1 to Val-144 constitute an MGS-like domain.

This sequence belongs to the PurH family.

It catalyses the reaction (6R)-10-formyltetrahydrofolate + 5-amino-1-(5-phospho-beta-D-ribosyl)imidazole-4-carboxamide = 5-formamido-1-(5-phospho-D-ribosyl)imidazole-4-carboxamide + (6S)-5,6,7,8-tetrahydrofolate. The catalysed reaction is IMP + H2O = 5-formamido-1-(5-phospho-D-ribosyl)imidazole-4-carboxamide. Its pathway is purine metabolism; IMP biosynthesis via de novo pathway; 5-formamido-1-(5-phospho-D-ribosyl)imidazole-4-carboxamide from 5-amino-1-(5-phospho-D-ribosyl)imidazole-4-carboxamide (10-formyl THF route): step 1/1. It functions in the pathway purine metabolism; IMP biosynthesis via de novo pathway; IMP from 5-formamido-1-(5-phospho-D-ribosyl)imidazole-4-carboxamide: step 1/1. This Anaeromyxobacter dehalogenans (strain 2CP-C) protein is Bifunctional purine biosynthesis protein PurH.